The sequence spans 410 residues: Peptidase T (410 aa).

Position 79 (His-79) interacts with Zn(2+). Asp-81 is a catalytic residue. Position 142 (Asp-142) interacts with Zn(2+). The active-site Proton acceptor is the Glu-176. 3 residues coordinate Zn(2+): Glu-177, Asp-199, and His-381.

It belongs to the peptidase M20B family. Requires Zn(2+) as cofactor.

Its subcellular location is the cytoplasm. It catalyses the reaction Release of the N-terminal residue from a tripeptide.. Its function is as follows. Cleaves the N-terminal amino acid of tripeptides. The protein is Peptidase T of Bacillus cereus (strain G9842).